A 141-amino-acid chain; its full sequence is Small ribosomal subunit protein uS11 (141 aa).

The protein belongs to the universal ribosomal protein uS11 family. Part of the 30S ribosomal subunit.

Functionally, located on the platform of the 30S subunit. This is Small ribosomal subunit protein uS11 from Pyrobaculum calidifontis (strain DSM 21063 / JCM 11548 / VA1).